The following is a 137-amino-acid chain: Major seminal plasma glycoprotein PSP-II (137 aa).

An N-terminal signal peptide occupies residues 1–21 (MKLGTAIPWALLLSTATLVST). 2 disulfide bridges follow: Cys30–Cys51 and Cys74–Cys95. The CUB domain maps to 30-131 (CGRVIKDTSG…SPFLIYFYGS (102 aa)). The N-linked (GlcNAc...) (complex) asparagine glycan is linked to Asn119.

In terms of assembly, monomer or heterodimer with PSP-I (depending on the type of glycosylation of PSP-I). In terms of tissue distribution, seminal plasma or sperm.

It localises to the secreted. This chain is Major seminal plasma glycoprotein PSP-II, found in Sus scrofa (Pig).